The chain runs to 183 residues: Capsid protein (183 aa).

The interval 136-183 (NAPILSTLPETTVVRRRGRSPRRRTPSPRRRRSQSPRRRRSQSPASQC) is disordered. Residues 149–176 (VRRRGRSPRRRTPSPRRRRSQSPRRRRS) are compositionally biased toward basic residues. Phosphoserine; by host occurs at positions 155, 162, and 170. The stretch at 155 to 161 (SPRRRTP) is one 1; half-length repeat. The 3 X 8 AA repeats of S-P-R-R-R-[PR]-S-Q stretch occupies residues 155-177 (SPRRRTPSPRRRRSQSPRRRRSQ). A Bipartite nuclear localization signal motif is present at residues 158–175 (RRTPSPRRRRSQSPRRRR). 2 repeat units span residues 162 to 169 (SPRRRRSQ) and 170 to 177 (SPRRRRSQ). An RNA binding region spans residues 177–183 (QSPASQC).

It belongs to the orthohepadnavirus core antigen family. In terms of assembly, homodimerizes, then multimerizes. Interacts with cytosol exposed regions of viral L glycoprotein present in the reticulum-to-Golgi compartment. Interacts with human FLNB. Phosphorylated form interacts with host importin alpha; this interaction depends on the exposure of the NLS, which itself depends upon genome maturation and/or phosphorylation of the capsid protein. Interacts with host NUP153. Phosphorylated by host SRPK1, SRPK2, and maybe protein kinase C or GAPDH. Phosphorylation is critical for pregenomic RNA packaging. Protein kinase C phosphorylation is stimulated by HBx protein and may play a role in transport of the viral genome to the nucleus at the late step during the viral replication cycle.

It is found in the virion. Its subcellular location is the host cytoplasm. In terms of biological role, self assembles to form an icosahedral capsid. Most capsids appear to be large particles with an icosahedral symmetry of T=4 and consist of 240 copies of capsid protein, though a fraction forms smaller T=3 particles consisting of 180 capsid proteins. Entering capsids are transported along microtubules to the nucleus. Phosphorylation of the capsid is thought to induce exposure of nuclear localization signal in the C-terminal portion of the capsid protein that allows binding to the nuclear pore complex via the importin (karyopherin-) alpha and beta. Capsids are imported in intact form through the nuclear pore into the nuclear basket, where it probably binds NUP153. Only capsids that contain the mature viral genome can release the viral DNA and capsid protein into the nucleoplasm. Immature capsids get stuck in the basket. Capsids encapsulate the pre-genomic RNA and the P protein. Pre-genomic RNA is reverse-transcribed into DNA while the capsid is still in the cytoplasm. The capsid can then either be directed to the nucleus, providing more genomes for transcription, or bud through the endoplasmic reticulum to provide new virions. The chain is Capsid protein from Pan troglodytes (Chimpanzee).